The sequence spans 327 residues: tRNA N6-adenosine threonylcarbamoyltransferase (327 aa).

The Fe cation site is built by His-109 and His-113. Substrate is bound by residues 132-136 (MVSGG), Asp-165, Gly-178, Asp-182, and Asn-268. Residue Asp-296 participates in Fe cation binding.

It belongs to the KAE1 / TsaD family. It depends on Fe(2+) as a cofactor.

The protein localises to the cytoplasm. It carries out the reaction L-threonylcarbamoyladenylate + adenosine(37) in tRNA = N(6)-L-threonylcarbamoyladenosine(37) in tRNA + AMP + H(+). In terms of biological role, required for the formation of a threonylcarbamoyl group on adenosine at position 37 (t(6)A37) in tRNAs that read codons beginning with adenine. Is involved in the transfer of the threonylcarbamoyl moiety of threonylcarbamoyl-AMP (TC-AMP) to the N6 group of A37, together with TsaE and TsaB. TsaD likely plays a direct catalytic role in this reaction. The polypeptide is tRNA N6-adenosine threonylcarbamoyltransferase (Thermotoga neapolitana (strain ATCC 49049 / DSM 4359 / NBRC 107923 / NS-E)).